The sequence spans 106 residues: A-type ATP synthase subunit F (106 aa).

This sequence belongs to the V-ATPase F subunit family. In terms of assembly, has multiple subunits with at least A(3), B(3), C, D, E, F, H, I and proteolipid K(x).

Its subcellular location is the cell membrane. Its function is as follows. Component of the A-type ATP synthase that produces ATP from ADP in the presence of a proton gradient across the membrane. The sequence is that of A-type ATP synthase subunit F from Haloferax volcanii (strain ATCC 29605 / DSM 3757 / JCM 8879 / NBRC 14742 / NCIMB 2012 / VKM B-1768 / DS2) (Halobacterium volcanii).